Reading from the N-terminus, the 903-residue chain is MVCVTDQNNENPSQNRADKLPKSWDPKAVEADLYQGWVDAGYFTADPASEKPGYSIVLPPPNVTGQLHMGHALDHTLMDALARRKRMQGFEVLWLPGMDHAGIATQTKVEEMLKETEGKSRYDYSREEFIEKVWEWKKEYGGKIGEQMRAIGDSVDWSRERFTLDEGLSRAVQTIFKKLYDSGMIYQANRLVNWSPVLETAVSDIEVVYKDVEGELVSIRYGSLNDDEPHVVVATTRVETMLGDVAVAVHPDDERYRHLVGTTLPHPFRDDLTLKVVADDYVDPEFGSGAVKITPAHDPNDYALGLRHHLDMPTIMDKTGRIADTGTQFDGMTREEARVKVREALAEQGRIVKEVRPYVHSVGHSERSGEAIEPRLSLQWWVKVEELAKMSGDAVRAGDTTIHPKSLEPRYFDWVDDMHDWCISRQLWWGHRIPIWYGPDGDVICVGPDEQAPEGYTQDPDVLDTWFSSALWPFSTMGWPDKTPELDKFYPTSVLVTAYDILFFWVARMMMFGTFAAKETPELLGEGTDGRPQVPFTDLFLHGLVRDEHGRKMSKSLGNGIDPMDWVDNYGADALRFTLARGANPGVDLPVGEDSAQSSRNFATKLFNATRFALMNGAVSEGLPERAELTDADRWILDRLEEVRGHVDDYLDNYQFAKANEELYHFAWNEFCDWYLEIAKVQIPREGVTERGRNTQQVLGHVLDALLRLLHPAMPFVTEVLWKALTDGESIVTSSWPTPADTNGGAAVDADAARRIADVEKLVTEIRRFRSDQGVKPSQKVPARLDFAACDLTELEGAVRALVRIEEPAEDFEESASLEIRLSTATITVELDTSGTVDVAAERKRLEKDLATANKELETTGKKLGNEAFLAKAPDAVVEKIRGRQQVAREEVERITKRLEELG.

Residues Met1 to Asn15 show a composition bias toward polar residues. The tract at residues Met1–Lys22 is disordered. The 'HIGH' region signature appears at Pro61–His71. The short motif at Lys552–Ser556 is the 'KMSKS' region element. ATP is bound at residue Lys555. A coiled-coil region spans residues Thr836–Leu902.

The protein belongs to the class-I aminoacyl-tRNA synthetase family. ValS type 1 subfamily. As to quaternary structure, monomer.

The protein localises to the cytoplasm. The catalysed reaction is tRNA(Val) + L-valine + ATP = L-valyl-tRNA(Val) + AMP + diphosphate. Functionally, catalyzes the attachment of valine to tRNA(Val). As ValRS can inadvertently accommodate and process structurally similar amino acids such as threonine, to avoid such errors, it has a 'posttransfer' editing activity that hydrolyzes mischarged Thr-tRNA(Val) in a tRNA-dependent manner. The chain is Valine--tRNA ligase from Corynebacterium efficiens (strain DSM 44549 / YS-314 / AJ 12310 / JCM 11189 / NBRC 100395).